We begin with the raw amino-acid sequence, 650 residues long: Glycoprotein antigen BM86 (650 aa).

Residues 1 to 19 (MRGIALFVAAVSLIVEGTA) form the signal peptide. EGF-like domains lie at 20 to 66 (ESSI…KQCE) and 67 to 104 (YKDTCKTRECSYGRCVESNPSKASCVCEASDDLTLQCK). Intrachain disulfides connect cysteine 24-cysteine 37, cysteine 32-cysteine 49, cysteine 51-cysteine 65, cysteine 71-cysteine 81, cysteine 76-cysteine 91, and cysteine 93-cysteine 103. 2 N-linked (GlcNAc...) asparagine glycosylation sites follow: asparagine 141 and asparagine 182. EGF-like domains lie at 205–247 (CINA…ITCK), 251–292 (HTVS…DTCI), and 291–335 (CISD…NECL). Cystine bridges form between cysteine 209-cysteine 222, cysteine 218-cysteine 231, cysteine 233-cysteine 246, cysteine 255-cysteine 269, cysteine 263-cysteine 278, cysteine 280-cysteine 291, cysteine 295-cysteine 307, cysteine 300-cysteine 316, and cysteine 318-cysteine 334. Asparagine 348 and asparagine 382 each carry an N-linked (GlcNAc...) asparagine glycan. EGF-like domains are found at residues 482-530 (RRSV…IGCI) and 531-568 (ERTTCNPKEIQECQDKKLECVYKNHKAECECPDDHECY). Disulfide bonds link cysteine 486-cysteine 500, cysteine 492-cysteine 516, cysteine 518-cysteine 529, cysteine 535-cysteine 550, cysteine 543-cysteine 559, and cysteine 561-cysteine 567. The tract at residues 603–628 (KSEATTAATTTTKAKDKDPDPGKSSA) is disordered. Residue serine 627 is the site of GPI-anchor amidated serine attachment. The propeptide at 628 to 650 (AAAVSATGLLLLLAATSVTAASL) is removed in mature form.

The protein localises to the cell membrane. The polypeptide is Glycoprotein antigen BM86 (Rhipicephalus microplus (Cattle tick)).